Consider the following 219-residue polypeptide: Protein-L-isoaspartate O-methyltransferase 2 (219 aa).

The active site involves serine 67.

The protein belongs to the methyltransferase superfamily. L-isoaspartyl/D-aspartyl protein methyltransferase family.

It is found in the cytoplasm. It carries out the reaction [protein]-L-isoaspartate + S-adenosyl-L-methionine = [protein]-L-isoaspartate alpha-methyl ester + S-adenosyl-L-homocysteine. Functionally, catalyzes the methyl esterification of L-isoaspartyl residues in peptides and proteins that result from spontaneous decomposition of normal L-aspartyl and L-asparaginyl residues. It plays a role in the repair and/or degradation of damaged proteins. The chain is Protein-L-isoaspartate O-methyltransferase 2 from Nitrosococcus oceani (strain ATCC 19707 / BCRC 17464 / JCM 30415 / NCIMB 11848 / C-107).